A 442-amino-acid polypeptide reads, in one-letter code: Protein PhoH2 (442 aa).

The 133-residue stretch at 3–135 folds into the PINc domain; it reads KIYVLDTNVL…LVSKDVLVRV (133 aa). Residue 259-266 coordinates ATP; the sequence is GKAGTGKT.

In the N-terminal section; belongs to the PINc/VapC protein family. This sequence in the C-terminal section; belongs to the PhoH family.

The catalysed reaction is n ATP + n H2O + wound RNA = n ADP + n phosphate + unwound RNA.. It catalyses the reaction ATP + H2O = ADP + phosphate + H(+). The enzyme catalyses GTP + H2O = GDP + phosphate + H(+). In terms of biological role, unwinds and/or cleaves 5'-tailed RNA in vitro. Has ATPase and GTPase activities. Unlike the protein in mycobacteria there does not seem to be an antitoxin gene upstream, suggesting this is not a toxin-antitoxin system. The chain is Protein PhoH2 from Bacillus subtilis (strain 168).